The chain runs to 431 residues: Glutamate-1-semialdehyde 2,1-aminomutase (431 aa).

Lys267 is modified (N6-(pyridoxal phosphate)lysine).

The protein belongs to the class-III pyridoxal-phosphate-dependent aminotransferase family. HemL subfamily. Homodimer. The cofactor is pyridoxal 5'-phosphate.

Its subcellular location is the cytoplasm. The enzyme catalyses (S)-4-amino-5-oxopentanoate = 5-aminolevulinate. It functions in the pathway porphyrin-containing compound metabolism; protoporphyrin-IX biosynthesis; 5-aminolevulinate from L-glutamyl-tRNA(Glu): step 2/2. The protein is Glutamate-1-semialdehyde 2,1-aminomutase of Syntrophomonas wolfei subsp. wolfei (strain DSM 2245B / Goettingen).